The chain runs to 92 residues: Small ribosomal subunit protein uS19c (92 aa).

Belongs to the universal ribosomal protein uS19 family.

It localises to the plastid. Its subcellular location is the chloroplast. Protein S19 forms a complex with S13 that binds strongly to the 16S ribosomal RNA. The chain is Small ribosomal subunit protein uS19c from Pyropia yezoensis (Susabi-nori).